A 73-amino-acid chain; its full sequence is uncharacterized protein (73 aa).

This is an uncharacterized protein from Swinepox virus (strain Kasza) (SWPV).